We begin with the raw amino-acid sequence, 142 residues long: Small ribosomal subunit protein uS9 (142 aa).

This sequence belongs to the universal ribosomal protein uS9 family.

It is found in the cytoplasm. This chain is Small ribosomal subunit protein uS9 (RPS16), found in Syntrichia ruralis (Great hairy screw-moss).